A 372-amino-acid polypeptide reads, in one-letter code: MEFTLEATSKNARACTIKTAHSTIKTPVFMPVGTLGSVKALDMEDVLDLLGAEIILANTYHMYLRPGDETVAKMGKLHGFTTYPKSFLTDSGGFQAFSLSDISKASENGIEFRSHIDGSKHFFTPKKVIDIQHNLGSDIMMILDDLVALPATGERIALSIERTTAWAKESIEYFRKKQKEGIGAEQNIFAIIQGGTDKAFRTKSATELCALDFDGFAIGGLSVGELNNEMYDTVEHTVKYMPKDKPRYLMGVGTPEDLIENIERGIDMFDCVMPTRNARNGTLFTSFGRLNIKGATYKEDAQPVDSECECLTCKRYSRAYLNHLFRSREIAYFRLATIHNLHYYLNLMREAREAILEDKYAEFKAEFYRKRG.

Residue D90 is the Proton acceptor of the active site. Substrate is bound by residues 90-94 (DSGGF), D144, Q193, and G220. Residues 251 to 257 (GVGTPED) are RNA binding. D270 serves as the catalytic Nucleophile. An RNA binding; important for wobble base 34 recognition region spans residues 275–279 (TRNAR). 4 residues coordinate Zn(2+): C308, C310, C313, and H339.

The protein belongs to the queuine tRNA-ribosyltransferase family. Homodimer. Within each dimer, one monomer is responsible for RNA recognition and catalysis, while the other monomer binds to the replacement base PreQ1. It depends on Zn(2+) as a cofactor.

The enzyme catalyses 7-aminomethyl-7-carbaguanine + guanosine(34) in tRNA = 7-aminomethyl-7-carbaguanosine(34) in tRNA + guanine. It functions in the pathway tRNA modification; tRNA-queuosine biosynthesis. In terms of biological role, catalyzes the base-exchange of a guanine (G) residue with the queuine precursor 7-aminomethyl-7-deazaguanine (PreQ1) at position 34 (anticodon wobble position) in tRNAs with GU(N) anticodons (tRNA-Asp, -Asn, -His and -Tyr). Catalysis occurs through a double-displacement mechanism. The nucleophile active site attacks the C1' of nucleotide 34 to detach the guanine base from the RNA, forming a covalent enzyme-RNA intermediate. The proton acceptor active site deprotonates the incoming PreQ1, allowing a nucleophilic attack on the C1' of the ribose to form the product. After dissociation, two additional enzymatic reactions on the tRNA convert PreQ1 to queuine (Q), resulting in the hypermodified nucleoside queuosine (7-(((4,5-cis-dihydroxy-2-cyclopenten-1-yl)amino)methyl)-7-deazaguanosine). The protein is Queuine tRNA-ribosyltransferase of Sulfurimonas denitrificans (strain ATCC 33889 / DSM 1251) (Thiomicrospira denitrificans (strain ATCC 33889 / DSM 1251)).